A 549-amino-acid polypeptide reads, in one-letter code: Pleckstrin homology domain-containing family A member 8 (549 aa).

In terms of domain architecture, PH spans 1-93 (MEGVLYKWTN…WLVALGTAKA (93 aa)). Disordered regions lie at residues 180–245 (NPDL…ENIS) and 257–312 (QNDL…QEVQ). Residues 203–219 (KSNDPKNLHPGETRKDL) are compositionally biased toward basic and acidic residues. Positions 276-288 (EPVEEQQTDGSTE) are enriched in acidic residues. Polar residues predominate over residues 299–309 (EVSMSPTQNKQ).

The protein localises to the cytoplasm. It localises to the golgi apparatus. Its subcellular location is the trans-Golgi network membrane. It is found in the membrane. In terms of biological role, cargo transport protein that is required for apical transport from the trans-Golgi network (TGN) to the plasma membrane. The sequence is that of Pleckstrin homology domain-containing family A member 8 (plekha8) from Danio rerio (Zebrafish).